The sequence spans 330 residues: MKSQPVTQELHFIFPLFKTISSDIMSFLVSIAGIAMLAQIVLGTFANVFIVLVTCTDCIRRRKLFLADGILTSLAFCRIGMLWVILISWCSIVFHQALSLQVRFSICVGWAVTNHFNMWLATILSILYLLKIGNFSNLIFLGLKRKIKSVFIVVLLASLVLLFPNLITVTVCETVQANGYRGNLTGKTKRTYFMNLTAMISFTLDNIISFTISMVCFLLLIYSLCKHLRTMRLYGKGPHNPSASAHIKALQAVISFLLLFSMFILSLIISGYNYMKPLNEPVHLICQLIGTLYPSSHSYVLLWGNRRIKLAFVLAMVQVRARLWLKEEKP.

At 1–32 (MKSQPVTQELHFIFPLFKTISSDIMSFLVSIA) the chain is on the extracellular side. Residues 33-53 (GIAMLAQIVLGTFANVFIVLV) form a helical membrane-spanning segment. Residues 54 to 73 (TCTDCIRRRKLFLADGILTS) are Cytoplasmic-facing. A helical membrane pass occupies residues 74-94 (LAFCRIGMLWVILISWCSIVF). Residues 95–122 (HQALSLQVRFSICVGWAVTNHFNMWLAT) are Extracellular-facing. The chain crosses the membrane as a helical span at residues 123–143 (ILSILYLLKIGNFSNLIFLGL). The Cytoplasmic segment spans residues 144-149 (KRKIKS). A helical transmembrane segment spans residues 150-170 (VFIVVLLASLVLLFPNLITVT). Topologically, residues 171–201 (VCETVQANGYRGNLTGKTKRTYFMNLTAMIS) are extracellular. N-linked (GlcNAc...) asparagine glycosylation is found at asparagine 183 and asparagine 195. A helical transmembrane segment spans residues 202–222 (FTLDNIISFTISMVCFLLLIY). Topologically, residues 223–248 (SLCKHLRTMRLYGKGPHNPSASAHIK) are cytoplasmic. A helical membrane pass occupies residues 249 to 269 (ALQAVISFLLLFSMFILSLII). Over 270–283 (SGYNYMKPLNEPVH) the chain is Extracellular. Residues 284 to 304 (LICQLIGTLYPSSHSYVLLWG) traverse the membrane as a helical segment. Residues 305–330 (NRRIKLAFVLAMVQVRARLWLKEEKP) are Cytoplasmic-facing.

This sequence belongs to the G-protein coupled receptor T2R family.

It localises to the membrane. In terms of biological role, putative taste receptor which may play a role in the perception of bitterness. This is Taste receptor type 2 member 136 from Rattus norvegicus (Rat).